A 116-amino-acid polypeptide reads, in one-letter code: Non-specific lipid transfer protein GPI-anchored 17 (116 aa).

Positions 1–24 (MKIGVVLVLLTVFVVVMSSTSVSA) are cleaved as a signal peptide. 3 cysteine pairs are disulfide-bonded: Cys31/Cys74, Cys42/Cys58, and Cys59/Cys99. The GPI-anchor amidated asparagine moiety is linked to residue Asn107. Residues 108–116 (GKNFKNTSL) constitute a propeptide, removed in mature form. N-linked (GlcNAc...) asparagine glycosylation is present at Asn113.

Belongs to the plant LTP family. Expressed in seedlings, preferentially in roots.

Its subcellular location is the cell membrane. Probable lipid transfer protein. In Arabidopsis thaliana (Mouse-ear cress), this protein is Non-specific lipid transfer protein GPI-anchored 17.